The primary structure comprises 244 residues: DNA polymerase sliding clamp (244 aa).

This sequence belongs to the PCNA family. As to quaternary structure, homotrimer. The subunits circularize to form a toroid; DNA passes through its center. Replication factor C (RFC) is required to load the toroid on the DNA.

Functionally, sliding clamp subunit that acts as a moving platform for DNA processing. Responsible for tethering the catalytic subunit of DNA polymerase to DNA during high-speed replication. In conjunction with replication factor C (RFC) stimulates DNA synthesis by PolB, relieving inhibition by replication protein A (RPA). In Methanothermobacter thermautotrophicus (strain ATCC 29096 / DSM 1053 / JCM 10044 / NBRC 100330 / Delta H) (Methanobacterium thermoautotrophicum), this protein is DNA polymerase sliding clamp.